We begin with the raw amino-acid sequence, 346 residues long: Small ribosomal subunit biogenesis GTPase RsgA (346 aa).

The 164-residue stretch at 98-261 folds into the CP-type G domain; sequence VQGGRGPQLA…VIDTPGMRTL (164 aa). GTP contacts are provided by residues 148–151 and 200–208; these read TKAD and GSSGVGKST. Zn(2+) contacts are provided by C284, C289, H291, and C297. Positions 317–346 are disordered; the sequence is RKLSDENQHNTPVQSGPRGAKSPAGRGKRR.

The protein belongs to the TRAFAC class YlqF/YawG GTPase family. RsgA subfamily. Monomer. Associates with 30S ribosomal subunit, binds 16S rRNA. It depends on Zn(2+) as a cofactor.

The protein localises to the cytoplasm. Its function is as follows. One of several proteins that assist in the late maturation steps of the functional core of the 30S ribosomal subunit. Helps release RbfA from mature subunits. May play a role in the assembly of ribosomal proteins into the subunit. Circularly permuted GTPase that catalyzes slow GTP hydrolysis, GTPase activity is stimulated by the 30S ribosomal subunit. The sequence is that of Small ribosomal subunit biogenesis GTPase RsgA from Mesorhizobium japonicum (strain LMG 29417 / CECT 9101 / MAFF 303099) (Mesorhizobium loti (strain MAFF 303099)).